A 261-amino-acid chain; its full sequence is 4-hydroxy-tetrahydrodipicolinate reductase (261 aa).

8–13 (GYKGRM) is a binding site for NAD(+). Arg36 lines the NADP(+) pocket. Residues 95–97 (GTT) and 121–124 (APNF) each bind NAD(+). The active-site Proton donor/acceptor is His151. A (S)-2,3,4,5-tetrahydrodipicolinate-binding site is contributed by His152. Lys155 serves as the catalytic Proton donor. 161 to 162 (GT) is a binding site for (S)-2,3,4,5-tetrahydrodipicolinate.

It belongs to the DapB family.

It is found in the cytoplasm. The enzyme catalyses (S)-2,3,4,5-tetrahydrodipicolinate + NAD(+) + H2O = (2S,4S)-4-hydroxy-2,3,4,5-tetrahydrodipicolinate + NADH + H(+). The catalysed reaction is (S)-2,3,4,5-tetrahydrodipicolinate + NADP(+) + H2O = (2S,4S)-4-hydroxy-2,3,4,5-tetrahydrodipicolinate + NADPH + H(+). It functions in the pathway amino-acid biosynthesis; L-lysine biosynthesis via DAP pathway; (S)-tetrahydrodipicolinate from L-aspartate: step 4/4. Its function is as follows. Catalyzes the conversion of 4-hydroxy-tetrahydrodipicolinate (HTPA) to tetrahydrodipicolinate. This chain is 4-hydroxy-tetrahydrodipicolinate reductase, found in Lactiplantibacillus plantarum (strain ATCC BAA-793 / NCIMB 8826 / WCFS1) (Lactobacillus plantarum).